The chain runs to 337 residues: Eukaryotic translation initiation factor 3 subunit H (337 aa).

Positions 21–153 constitute an MPN domain; that stretch reads VQCDGLAVMK…LKAYRLTPQA (133 aa).

Belongs to the eIF-3 subunit H family. Component of the eukaryotic translation initiation factor 3 (eIF-3) complex. The eIF-3 complex interacts with pix. Interacts with mxt.

It is found in the cytoplasm. Functionally, component of the eukaryotic translation initiation factor 3 (eIF-3) complex, which is involved in protein synthesis of a specialized repertoire of mRNAs and, together with other initiation factors, stimulates binding of mRNA and methionyl-tRNAi to the 40S ribosome. The eIF-3 complex specifically targets and initiates translation of a subset of mRNAs involved in cell proliferation. This Drosophila ananassae (Fruit fly) protein is Eukaryotic translation initiation factor 3 subunit H.